Consider the following 271-residue polypeptide: Phosphatidate cytidylyltransferase (271 aa).

A run of 8 helical transmembrane segments spans residues 12–32 (LLPI…ALFI), 53–73 (FGRV…YHLP), 75–95 (LAGA…VLVL), 111–131 (LGMG…LKQW), 136–156 (GLII…YFSG), 174–194 (WEGV…VGLY), 199–219 (LGAL…SIVG), and 251–271 (SLTA…WGAP).

It belongs to the CDS family.

It is found in the cell inner membrane. It catalyses the reaction a 1,2-diacyl-sn-glycero-3-phosphate + CTP + H(+) = a CDP-1,2-diacyl-sn-glycerol + diphosphate. Its pathway is phospholipid metabolism; CDP-diacylglycerol biosynthesis; CDP-diacylglycerol from sn-glycerol 3-phosphate: step 3/3. In Pseudomonas aeruginosa (strain ATCC 15692 / DSM 22644 / CIP 104116 / JCM 14847 / LMG 12228 / 1C / PRS 101 / PAO1), this protein is Phosphatidate cytidylyltransferase (cdsA).